Reading from the N-terminus, the 175-residue chain is Co-chaperone protein HscB homolog (175 aa).

The region spanning 2–74 (NYFQLFNIEV…LQRAEYILVQ (73 aa)) is the J domain.

It belongs to the HscB family. As to quaternary structure, interacts with HscA and stimulates its ATPase activity.

Co-chaperone involved in the maturation of iron-sulfur cluster-containing proteins. Seems to help targeting proteins to be folded toward HscA. In Colwellia psychrerythraea (strain 34H / ATCC BAA-681) (Vibrio psychroerythus), this protein is Co-chaperone protein HscB homolog.